The sequence spans 162 residues: Endoribonuclease YbeY (162 aa).

Residues His127, His131, and His137 each coordinate Zn(2+).

This sequence belongs to the endoribonuclease YbeY family. The cofactor is Zn(2+).

It localises to the cytoplasm. Single strand-specific metallo-endoribonuclease involved in late-stage 70S ribosome quality control and in maturation of the 3' terminus of the 16S rRNA. This is Endoribonuclease YbeY from Acetivibrio thermocellus (strain ATCC 27405 / DSM 1237 / JCM 9322 / NBRC 103400 / NCIMB 10682 / NRRL B-4536 / VPI 7372) (Clostridium thermocellum).